The chain runs to 383 residues: Putative glutamate--cysteine ligase 2-1 (383 aa).

Belongs to the glutamate--cysteine ligase type 2 family. YbdK subfamily.

The catalysed reaction is L-cysteine + L-glutamate + ATP = gamma-L-glutamyl-L-cysteine + ADP + phosphate + H(+). In terms of biological role, ATP-dependent carboxylate-amine ligase which exhibits weak glutamate--cysteine ligase activity. The protein is Putative glutamate--cysteine ligase 2-1 of Arthrobacter sp. (strain FB24).